Consider the following 87-residue polypeptide: MNISRNEQRALHVLALGGRILHERDDRRKITAVTCVTREGMILSDFALETFLRLRRKRLIESRSGSPYCISKRGRLSVRAQLDNQGA.

Belongs to the UPF0386 family.

This is UPF0386 protein RSKD131_0371 from Cereibacter sphaeroides (strain KD131 / KCTC 12085) (Rhodobacter sphaeroides).